The following is a 125-amino-acid chain: MINAPRVCVQIQSFYVESQSEPDEERFVFAYTVTVRNLGRHEVQLLGRYWLITNGNGRQTEVQGEGVVGEQPIIEPGGEFQYTSGAVMETPLGTMEGHYHMVDHQSKAFQVPIPVFRLAIPSLIH.

Positions 1–125 (MINAPRVCVQ…FRLAIPSLIH (125 aa)) constitute an ApaG domain.

The polypeptide is Protein ApaG (Pectobacterium atrosepticum (strain SCRI 1043 / ATCC BAA-672) (Erwinia carotovora subsp. atroseptica)).